Reading from the N-terminus, the 163-residue chain is Ribosome maturation factor RimP (163 aa).

The protein belongs to the RimP family.

The protein resides in the cytoplasm. Its function is as follows. Required for maturation of 30S ribosomal subunits. This is Ribosome maturation factor RimP from Streptococcus mutans serotype c (strain ATCC 700610 / UA159).